Here is a 391-residue protein sequence, read N- to C-terminus: NADH-quinone oxidoreductase subunit D (391 aa).

This sequence belongs to the complex I 49 kDa subunit family. As to quaternary structure, NDH-1 is composed of 14 different subunits. Subunits NuoB, C, D, E, F, and G constitute the peripheral sector of the complex.

The protein resides in the cell inner membrane. The catalysed reaction is a quinone + NADH + 5 H(+)(in) = a quinol + NAD(+) + 4 H(+)(out). Its function is as follows. NDH-1 shuttles electrons from NADH, via FMN and iron-sulfur (Fe-S) centers, to quinones in the respiratory chain. The immediate electron acceptor for the enzyme in this species is believed to be ubiquinone. Couples the redox reaction to proton translocation (for every two electrons transferred, four hydrogen ions are translocated across the cytoplasmic membrane), and thus conserves the redox energy in a proton gradient. This Rickettsia bellii (strain OSU 85-389) protein is NADH-quinone oxidoreductase subunit D.